The following is a 444-amino-acid chain: DNA repair protein RadA (444 aa).

The segment at 8–25 adopts a C4-type zinc-finger fold; sequence CSNCGNISPKWSGQCFDC. Residue 89-96 coordinates ATP; the sequence is GDPGIGKS. The RadA KNRFG motif motif lies at 248 to 252; that stretch reads KNRFG. Positions 347-444 are lon-protease-like; the sequence is EVYLSIAGGL…HLKDLKEIIK (98 aa).

This sequence belongs to the RecA family. RadA subfamily.

Its function is as follows. DNA-dependent ATPase involved in processing of recombination intermediates, plays a role in repairing DNA breaks. Stimulates the branch migration of RecA-mediated strand transfer reactions, allowing the 3' invading strand to extend heteroduplex DNA faster. Binds ssDNA in the presence of ADP but not other nucleotides, has ATPase activity that is stimulated by ssDNA and various branched DNA structures, but inhibited by SSB. Does not have RecA's homology-searching function. The chain is DNA repair protein RadA from Rickettsia conorii (strain ATCC VR-613 / Malish 7).